The primary structure comprises 309 residues: Myristoylated alanine-rich C-kinase substrate (309 aa).

The segment at 1–309 (MGAQFSKTAA…PEAPPAPTAE (309 aa)) is disordered. A lipid anchor (N-myristoyl glycine) is attached at Gly2. The residue at position 15 (Thr15) is a Phosphothreonine. A phosphoserine mark is found at Ser26, Ser27, Ser29, Ser46, Ser63, and Ser74. Residues 26–35 (SSPSKANGQE) show a composition bias toward polar residues. 3 stretches are compositionally biased toward low complexity: residues 73-82 (ASGSAATPAA), 89-98 (AAATEPGAGA), and 109-142 (AEPSSPAAEAEGASASSTSSPKAEDGAAPSPSSE). Thr79 is modified (phosphothreonine). Position 113 is a phosphoserine; by MAPK (Ser113). Ser122, Ser128, Ser138, Ser140, and Ser141 each carry phosphoserine. At Thr143 the chain carries Phosphothreonine. The segment covering 145–157 (KKKKKRFSFKKSF) has biased composition (basic residues). The tract at residues 145–169 (KKKKKRFSFKKSFKLSGFSFKKSKK) is calmodulin-binding (PSD). Residues Ser152 and Ser156 each carry the phosphoserine; by PKC modification. Ser160 carries the post-translational modification Phosphoserine. The residue at position 163 (Ser163) is a Phosphoserine; by PKC. Lys165 is modified (N6-acetyllysine). Ser171 is modified (phosphoserine). Residues 190–203 (AAAAGGEGAAAPGE) are compositionally biased toward low complexity. The span at 204-215 (QAGGAGAEGAAG) shows a compositional bias: gly residues. Ser246 is modified (phosphoserine). Positions 256-290 (PAPGATAGDASSAAGPEQEAPAATDEAAASAAPAA) are enriched in low complexity. Ser291 bears the Phosphoserine mark. The segment covering 291–309 (SPEPQPECSPEAPPAPTAE) has biased composition (pro residues).

This sequence belongs to the MARCKS family. As to quaternary structure, interacts with CDC42. Interacts with GTP-bound form of RAB10. Interacts with calmodulin/CALM1. Acetylated at Lys-165 by KAT5; acetylation is required for its subsequent phosphorylation. Deacetylated by SIRT2. Post-translationally, phosphorylation by PKC displaces MARCKS from the membrane. It also inhibits the F-actin cross-linking activity. PKC-mediated phosphorylation increases 4 to 5-fold upon TNF-alpha or LPS induction. In terms of processing, myristoylated. A proper myristoylation is essential for the proper distribution to the plasma membrane. Phosphorylation by PKC displaces MARCKS from the membrane. It also inhibits the F-actin cross-linking activity. In terms of tissue distribution, brain, spleen, less in kidney and heart, and very low levels in liver.

The protein localises to the cell membrane. The protein resides in the cytoplasm. It localises to the cytoskeleton. Functionally, membrane-associated protein that plays a role in the structural modulation of the actin cytoskeleton, chemotaxis, motility, cell adhesion, phagocytosis, and exocytosis through lipid sequestering and/or protein docking to membranes. Thus, exerts an influence on a plethora of physiological processes, such as embryonic development, tissue regeneration, neuronal plasticity, and inflammation. Sequesters phosphatidylinositol 4,5-bisphosphate (PIP2) at lipid rafts in the plasma membrane of quiescent cells, an action reversed by protein kinase C, ultimately inhibiting exocytosis. During inflammation, promotes the migration of inflammatory cells and the secretion of cytokines such as tumor necrosis factor (TNF), particularly in macrophages. Plays an essential role in bacteria-induced intracellular reactive oxygen species (ROS) formation in the monocytic cell type. Participates in the regulation of neurite initiation and outgrowth by interacting with components of cellular machinery including CDC42 that regulates cell shape and process extension through modulation of the cytoskeleton. Also plays a role in axon development by mediating docking and fusion of RAB10-positive vesicles with the plasma membrane. This is Myristoylated alanine-rich C-kinase substrate (Marcks) from Mus musculus (Mouse).